The chain runs to 148 residues: Large ribosomal subunit protein bL9 (148 aa).

This sequence belongs to the bacterial ribosomal protein bL9 family.

Binds to the 23S rRNA. This is Large ribosomal subunit protein bL9 from Chromohalobacter salexigens (strain ATCC BAA-138 / DSM 3043 / CIP 106854 / NCIMB 13768 / 1H11).